The primary structure comprises 215 residues: Ribosomal RNA small subunit methyltransferase G (215 aa).

S-adenosyl-L-methionine is bound by residues Gly-71, Leu-76, and Arg-135.

The protein belongs to the methyltransferase superfamily. RNA methyltransferase RsmG family.

It is found in the cytoplasm. In terms of biological role, specifically methylates the N7 position of a guanine in 16S rRNA. This Salinibacter ruber (strain DSM 13855 / M31) protein is Ribosomal RNA small subunit methyltransferase G.